A 120-amino-acid polypeptide reads, in one-letter code: MFYWILLALAIAAEITGTLSMKWASVSNGNTGFILMLVMITLSYIFLSFAVKKIALGVAYALWEGIGILFITLFSVLLFDEALSAMKIAGLVTLVFGIALIKSGTRKPVNAAKEATHAAV.

4 consecutive transmembrane segments (helical) span residues 1-21 (MFYWILLALAIAAEITGTLSM), 31-51 (TGFILMLVMITLSYIFLSFAV), 54-74 (IALGVAYALWEGIGILFITLF), and 81-101 (EALSAMKIAGLVTLVFGIALI).

This sequence belongs to the drug/metabolite transporter (DMT) superfamily. Small multidrug resistance (SMR) (TC 2.A.7.1) family. MdtJ subfamily. Forms a complex with MdtI.

It is found in the cell inner membrane. In terms of biological role, catalyzes the excretion of spermidine. This chain is Spermidine export protein MdtJ, found in Citrobacter koseri (strain ATCC BAA-895 / CDC 4225-83 / SGSC4696).